Reading from the N-terminus, the 203-residue chain is Glycerol-3-phosphate acyltransferase (203 aa).

The next 4 helical transmembrane spans lie at 4-24 (LVLL…AVLI), 80-100 (PFLL…PIFF), 116-136 (APIG…TVFI), and 138-158 (GYSS…TWFV).

It belongs to the PlsY family. As to quaternary structure, probably interacts with PlsX.

It localises to the cell inner membrane. It catalyses the reaction an acyl phosphate + sn-glycerol 3-phosphate = a 1-acyl-sn-glycero-3-phosphate + phosphate. It functions in the pathway lipid metabolism; phospholipid metabolism. In terms of biological role, catalyzes the transfer of an acyl group from acyl-phosphate (acyl-PO(4)) to glycerol-3-phosphate (G3P) to form lysophosphatidic acid (LPA). This enzyme utilizes acyl-phosphate as fatty acyl donor, but not acyl-CoA or acyl-ACP. The polypeptide is Glycerol-3-phosphate acyltransferase (Photobacterium profundum (strain SS9)).